Consider the following 132-residue polypeptide: Small ribosomal subunit protein uS11 (132 aa).

The protein belongs to the universal ribosomal protein uS11 family. Part of the 30S ribosomal subunit.

Its function is as follows. Located on the platform of the 30S subunit. The protein is Small ribosomal subunit protein uS11 of Sulfurisphaera tokodaii (strain DSM 16993 / JCM 10545 / NBRC 100140 / 7) (Sulfolobus tokodaii).